Reading from the N-terminus, the 351-residue chain is Lipoyl synthase, mitochondrial (351 aa).

Positions 84, 89, 95, 115, 119, 122, and 330 each coordinate [4Fe-4S] cluster. The region spanning 100–319 (DKSKATATIM…QKRAMDMGFL (220 aa)) is the Radical SAM core domain.

Belongs to the radical SAM superfamily. Lipoyl synthase family. [4Fe-4S] cluster is required as a cofactor.

The protein localises to the mitochondrion. The catalysed reaction is [[Fe-S] cluster scaffold protein carrying a second [4Fe-4S](2+) cluster] + N(6)-octanoyl-L-lysyl-[protein] + 2 oxidized [2Fe-2S]-[ferredoxin] + 2 S-adenosyl-L-methionine + 4 H(+) = [[Fe-S] cluster scaffold protein] + N(6)-[(R)-dihydrolipoyl]-L-lysyl-[protein] + 4 Fe(3+) + 2 hydrogen sulfide + 2 5'-deoxyadenosine + 2 L-methionine + 2 reduced [2Fe-2S]-[ferredoxin]. Its pathway is protein modification; protein lipoylation via endogenous pathway; protein N(6)-(lipoyl)lysine from octanoyl-[acyl-carrier-protein]: step 2/2. Functionally, catalyzes the radical-mediated insertion of two sulfur atoms into the C-6 and C-8 positions of the octanoyl moiety bound to the lipoyl domains of lipoate-dependent enzymes, thereby converting the octanoylated domains into lipoylated derivatives. The protein is Lipoyl synthase, mitochondrial of Yarrowia lipolytica (strain CLIB 122 / E 150) (Yeast).